A 351-amino-acid polypeptide reads, in one-letter code: Cyanuric acid amidohydrolase (351 aa).

The tract at residues methionine 1 to valine 96 is RU A. Residues arginine 53 and serine 77 to glycine 78 each bind substrate. Residues alanine 103–alanine 240 are RU B. Lysine 153 is a catalytic residue. Substrate is bound by residues arginine 185 and serine 223–serine 224. Residue serine 223 is the Nucleophile of the active site. Residues leucine 246–glutamine 351 form an RU C region. A Mg(2+)-binding site is contributed by glutamate 283. Substrate-binding positions include arginine 310 and serine 329–glycine 330. 5 residues coordinate Mg(2+): alanine 332, glutamine 335, glycine 336, proline 337, and glycine 340.

This sequence belongs to the cyclic amide hydrolase (CyAH) family. In terms of assembly, homotetramer.

The enzyme catalyses cyanurate + H2O = 1-carboxybiuret + H(+). Its pathway is xenobiotic degradation; atrazine degradation; biuret from cyanurate: step 1/1. Inhibited by barbituric acid. Functionally, responsible for the hydrolysis of cyanuric acid, an intermediate formed during catabolism of s-triazine based compounds in herbicides such as atrazine and polymers such as melamine. Catalyzes the hydrolytic opening of the s-triazine ring of cyanuric acid (2,4,6-trihydroxy-s-triazine) to yield carbon dioxide and carboxybiuret, which spontaneously decarboxylates to biuret. This Rhizobium leguminosarum bv. trifolii (strain WSM1325) protein is Cyanuric acid amidohydrolase.